An 871-amino-acid polypeptide reads, in one-letter code: Metabotropic glutamate receptor 6 (871 aa).

An N-terminal signal peptide occupies residues 1–23 (MGRLPVLLLWLAWWLSQAGIACG). Residues 24 to 579 (AGSVRLAGGL…VVRLTWSSPW (556 aa)) are Extracellular-facing. Cys-51 and Cys-93 form a disulfide bridge. L-glutamate is bound by residues Ser-148, 169-171 (AST), and Tyr-219. Disulfide bonds link Cys-238–Cys-530, Cys-361–Cys-377, Cys-417–Cys-424, Cys-512–Cys-531, Cys-516–Cys-534, Cys-537–Cys-549, and Cys-552–Cys-565. An N-linked (GlcNAc...) asparagine glycan is attached at Asn-290. Asp-301 contributes to the L-glutamate binding site. Lys-394 lines the L-glutamate pocket. 2 N-linked (GlcNAc...) asparagine glycosylation sites follow: Asn-445 and Asn-473. An N-linked (GlcNAc...) asparagine glycan is attached at Asn-561. Residues 580–602 (AALPLLLAVLGIMATTTIMATFM) traverse the membrane as a helical segment. Residues 603 to 616 (RHNDTPIVRASGRE) are Cytoplasmic-facing. Residues 617–637 (LSYVLLTGIFLIYAITFLMVA) form a helical membrane-spanning segment. The Extracellular portion of the chain corresponds to 638 to 648 (EPCAAICAARR). Residues 649 to 667 (LLLGLGTTLSYSALLTKTN) form a helical membrane-spanning segment. Residues 668–691 (RIYRIFEQGKRSVTPPPFISPTSQ) lie on the Cytoplasmic side of the membrane. The helical transmembrane segment at 692-712 (LVITFGLTSLQVVGVIAWLGA) threads the bilayer. At 713–742 (QPPHSVIDYEEQRTVDPEQARGVLKCDMSD) the chain is on the extracellular side. The chain crosses the membrane as a helical span at residues 743–764 (LSLIGCLGYSLLLMVTCTVYAI). The Cytoplasmic segment spans residues 765-777 (KARGVPETFNEAK). Residues 778-800 (PIGFTMYTTCIIWLAFVPIFFGT) traverse the membrane as a helical segment. The Extracellular segment spans residues 801-813 (AQSAEKIYIQTTT). Residues 814–839 (LTVSLSLSASVSLGMLYVPKTYVILF) traverse the membrane as a helical segment. Topologically, residues 840 to 871 (HPEQNVQKRKRSLKKTSTMAAPPQNENAEDAK) are cytoplasmic. The disordered stretch occupies residues 850–871 (RSLKKTSTMAAPPQNENAEDAK).

Belongs to the G-protein coupled receptor 3 family. In terms of assembly, homodimer. Interacts with GPR179. Interacts with photoreceptor synaptic protein LRIT1 (via its N-terminal extracellular domain). Restricted expression in the inner nuclear layer of the retina.

Its subcellular location is the cell membrane. The protein resides in the endoplasmic reticulum membrane. It localises to the golgi apparatus membrane. The protein localises to the cell projection. It is found in the dendrite. Its function is as follows. G-protein coupled receptor for glutamate. Ligand binding causes a conformation change that triggers signaling via guanine nucleotide-binding proteins (G proteins) and modulates the activity of down-stream effectors, such as adenylate cyclase. Signaling inhibits adenylate cyclase activity. Signaling stimulates TRPM1 channel activity and Ca(2+) uptake. Required for normal vision. This is Metabotropic glutamate receptor 6 (Grm6) from Rattus norvegicus (Rat).